The primary structure comprises 100 residues: uncharacterized protein (100 aa).

Residues 78-100 are disordered; the sequence is KPYRTESGTSSSNRMMLPPRQHV.

This is an uncharacterized protein from Caenorhabditis elegans.